The sequence spans 291 residues: Tumor necrosis factor ligand superfamily member 10 (291 aa).

Topologically, residues 1–17 (MPSSGALKDLSFSQHFR) are cytoplasmic. Residues 18–38 (MMVICIVLLQVLLQAVSVAVT) traverse the membrane as a helical; Signal-anchor for type II membrane protein segment. At 39-291 (YMYFTNEMKQ…ASFFGAFLIN (253 aa)) the chain is on the extracellular side. Asn52 carries an N-linked (GlcNAc...) asparagine glycan. Residues 126–290 (VAAHITGITR…EASFFGAFLI (165 aa)) enclose the THD domain. Cys240 contacts Zn(2+).

Belongs to the tumor necrosis factor family. Homotrimer. One TNFSF10 homotrimer interacts with three TNFSF10A mononers. One TNFSF10 homotrimer interacts with three TNFSF10B mononers. Tyrosine phosphorylated by PKDCC/VLK. In terms of tissue distribution, widespread.

Its subcellular location is the cell membrane. The protein localises to the secreted. Its function is as follows. Cytokine that binds to TNFRSF10A/TRAILR1, TNFRSF10B/TRAILR2, TNFRSF10C/TRAILR3, TNFRSF10D/TRAILR4 and possibly also to TNFRSF11B/OPG. Induces apoptosis. Its activity may be modulated by binding to the decoy receptors TNFRSF10C/TRAILR3, TNFRSF10D/TRAILR4 and TNFRSF11B/OPG that cannot induce apoptosis. The chain is Tumor necrosis factor ligand superfamily member 10 (Tnfsf10) from Mus musculus (Mouse).